A 483-amino-acid polypeptide reads, in one-letter code: UDP-N-acetylmuramoyl-L-alanyl-D-glutamate--2,6-diaminopimelate ligase (483 aa).

Residue S30 participates in UDP-N-acetyl-alpha-D-muramoyl-L-alanyl-D-glutamate binding. G109 to T115 is an ATP binding site. Residues T151–T152, S178, and R186 contribute to the UDP-N-acetyl-alpha-D-muramoyl-L-alanyl-D-glutamate site. The residue at position 218 (K218) is an N6-carboxylysine. Residues R380, D403–R406, G453, and E457 each bind meso-2,6-diaminopimelate. A Meso-diaminopimelate recognition motif motif is present at residues D403–R406.

This sequence belongs to the MurCDEF family. MurE subfamily. The cofactor is Mg(2+). Post-translationally, carboxylation is probably crucial for Mg(2+) binding and, consequently, for the gamma-phosphate positioning of ATP.

The protein resides in the cytoplasm. The catalysed reaction is UDP-N-acetyl-alpha-D-muramoyl-L-alanyl-D-glutamate + meso-2,6-diaminopimelate + ATP = UDP-N-acetyl-alpha-D-muramoyl-L-alanyl-gamma-D-glutamyl-meso-2,6-diaminopimelate + ADP + phosphate + H(+). It participates in cell wall biogenesis; peptidoglycan biosynthesis. Functionally, catalyzes the addition of meso-diaminopimelic acid to the nucleotide precursor UDP-N-acetylmuramoyl-L-alanyl-D-glutamate (UMAG) in the biosynthesis of bacterial cell-wall peptidoglycan. This Chlamydia abortus (strain DSM 27085 / S26/3) (Chlamydophila abortus) protein is UDP-N-acetylmuramoyl-L-alanyl-D-glutamate--2,6-diaminopimelate ligase.